A 319-amino-acid chain; its full sequence is Acetylglutamate kinase (319 aa).

Residues 74 to 75 (GG), Arg96, and Asn210 contribute to the substrate site.

The protein belongs to the acetylglutamate kinase family. ArgB subfamily.

Its subcellular location is the cytoplasm. It catalyses the reaction N-acetyl-L-glutamate + ATP = N-acetyl-L-glutamyl 5-phosphate + ADP. It participates in amino-acid biosynthesis; L-arginine biosynthesis; N(2)-acetyl-L-ornithine from L-glutamate: step 2/4. Catalyzes the ATP-dependent phosphorylation of N-acetyl-L-glutamate. The protein is Acetylglutamate kinase of Pseudarthrobacter chlorophenolicus (strain ATCC 700700 / DSM 12829 / CIP 107037 / JCM 12360 / KCTC 9906 / NCIMB 13794 / A6) (Arthrobacter chlorophenolicus).